A 469-amino-acid polypeptide reads, in one-letter code: Argininosuccinate lyase (469 aa).

Belongs to the lyase 1 family. Argininosuccinate lyase subfamily.

The protein localises to the cytoplasm. The catalysed reaction is 2-(N(omega)-L-arginino)succinate = fumarate + L-arginine. The protein operates within amino-acid biosynthesis; L-arginine biosynthesis; L-arginine from L-ornithine and carbamoyl phosphate: step 3/3. This chain is Argininosuccinate lyase, found in Burkholderia multivorans (strain ATCC 17616 / 249).